We begin with the raw amino-acid sequence, 39 residues long: Cecropin (39 aa).

The protein resides in the secreted. Its function is as follows. Antibacterial peptide active against Gram-negative bacterium E.coli. Has no activity against Gram-positive bacterium M.luteus. Weakly active against M.luteus. The chain is Cecropin from Calliphora vicina (Blue blowfly).